A 318-amino-acid chain; its full sequence is UAP56-interacting factor (318 aa).

Residue M1 is modified to N-acetylmethionine. The disordered stretch occupies residues 1-25 (MNRFGTRLVGATATSSPPPKARSNE). The residue at position 14 (T14) is a Phosphothreonine. 2 positions are modified to phosphoserine: S16 and S23. The UAP56-binding motif signature appears at 26-44 (NLDKIDMSLDDIIKLNRKE). The residue at position 61 (S61) is a Phosphoserine. A disordered region spans residues 79–100 (GFGKTSLNRRGRVMPGKRRPNG). Basic residues predominate over residues 85-98 (LNRRGRVMPGKRRP). S118 carries the phosphoserine modification. A Glycyl lysine isopeptide (Lys-Gly) (interchain with G-Cter in SUMO1) cross-link involves residue K140. K261 is covalently cross-linked (Glycyl lysine isopeptide (Lys-Gly) (interchain with G-Cter in SUMO2)).

This sequence belongs to the UIF family. As to quaternary structure, interacts with CHTOP. Interacts with DDX39B/UAP56 and NXF1; interaction with DDX39B/UAP56 and NXF1 are mutually exclusive. Interacts with SSRP1; required for its recruitment to mRNAs. Expressed in a wide variety of cancer types.

Its subcellular location is the nucleus. The protein resides in the nucleoplasm. The protein localises to the nucleus speckle. Its function is as follows. Required for mRNA export from the nucleus to the cytoplasm. Acts as an adapter that uses the DDX39B/UAP56-NFX1 pathway to ensure efficient mRNA export and delivering to the nuclear pore. Associates with spliced and unspliced mRNAs simultaneously with ALYREF/THOC4. This is UAP56-interacting factor (FYTTD1) from Homo sapiens (Human).